The following is a 1075-amino-acid chain: Carbamoyl phosphate synthase large chain (1075 aa).

Residues M1–E403 form a carboxyphosphate synthetic domain region. The ATP site is built by R129, R169, G175, G176, Q208, V210, E215, G241, V242, H243, Q285, and E299. The 196-residue stretch at K133 to V328 folds into the ATP-grasp 1 domain. Mg(2+) contacts are provided by Q285, E299, and N301. Residues Q285, E299, and N301 each coordinate Mn(2+). The tract at residues I404–A548 is oligomerization domain. The carbamoyl phosphate synthetic domain stretch occupies residues K549–G930. The 192-residue stretch at Q673–A864 folds into the ATP-grasp 2 domain. Residues R709, H748, L750, E755, G780, I781, H782, S783, Q823, and E835 each contribute to the ATP site. Mg(2+)-binding residues include Q823, E835, and N837. Residues Q823, E835, and N837 each contribute to the Mn(2+) site. Residues E931–A1070 enclose the MGS-like domain. Residues E931–R1075 are allosteric domain.

The protein belongs to the CarB family. In terms of assembly, composed of two chains; the small (or glutamine) chain promotes the hydrolysis of glutamine to ammonia, which is used by the large (or ammonia) chain to synthesize carbamoyl phosphate. Tetramer of heterodimers (alpha,beta)4. Requires Mg(2+) as cofactor. The cofactor is Mn(2+).

It catalyses the reaction hydrogencarbonate + L-glutamine + 2 ATP + H2O = carbamoyl phosphate + L-glutamate + 2 ADP + phosphate + 2 H(+). The catalysed reaction is hydrogencarbonate + NH4(+) + 2 ATP = carbamoyl phosphate + 2 ADP + phosphate + 2 H(+). It participates in amino-acid biosynthesis; L-arginine biosynthesis; carbamoyl phosphate from bicarbonate: step 1/1. It functions in the pathway pyrimidine metabolism; UMP biosynthesis via de novo pathway; (S)-dihydroorotate from bicarbonate: step 1/3. Its function is as follows. Large subunit of the glutamine-dependent carbamoyl phosphate synthetase (CPSase). CPSase catalyzes the formation of carbamoyl phosphate from the ammonia moiety of glutamine, carbonate, and phosphate donated by ATP, constituting the first step of 2 biosynthetic pathways, one leading to arginine and/or urea and the other to pyrimidine nucleotides. The large subunit (synthetase) binds the substrates ammonia (free or transferred from glutamine from the small subunit), hydrogencarbonate and ATP and carries out an ATP-coupled ligase reaction, activating hydrogencarbonate by forming carboxy phosphate which reacts with ammonia to form carbamoyl phosphate. This chain is Carbamoyl phosphate synthase large chain, found in Haemophilus ducreyi (strain 35000HP / ATCC 700724).